The chain runs to 169 residues: N-alpha-acetyltransferase 50 (169 aa).

The N-acetyltransferase domain maps to 6-155 (IELGDVTPHN…DAHVLQKNLK (150 aa)). T12 carries the phosphothreonine modification. Y31 is a substrate binding site. N6-acetyllysine occurs at positions 34 and 37. Y73 is a catalytic residue. M75 is a binding site for substrate. 77–90 (LGCLAPYRRLGIGT) lines the acetyl-CoA pocket. Y110 carries the post-translational modification Phosphotyrosine. Residue H112 is part of the active site. Position 117 to 126 (117 to 126 (NESAIDFYRK)) interacts with CoA. Positions 138–141 (YYKR) are substrate. K140 is subject to N6-acetyllysine.

The protein belongs to the acetyltransferase family. GNAT subfamily. Component of the N-terminal acetyltransferase E (NatE) complex at least composed of NAA10, NAA15 and NAA50. Interacts with NAA10. Interacts with NAA15. Predominantly interacts with NAA15 in the N-terminal acetyltransferase A complex (NatA complex); the interactions reduce the acetylation activity of the NatA complex. Component of the N-terminal acetyltransferase E (NatE)/HYPK complex at least composed of NAA10, NAA15, NAA50 and HYPK. Within the complex interacts with NAA15. Its capacity to interact with the NatA complex is reduced by HYPK. Interacts with NAA35.

It is found in the cytoplasm. The protein resides in the nucleus. It carries out the reaction N-terminal L-methionyl-L-alanyl-[protein] + acetyl-CoA = N-terminal N(alpha)-acetyl-L-methionyl-L-alanyl-[protein] + CoA + H(+). The enzyme catalyses N-terminal L-methionyl-L-seryl-[protein] + acetyl-CoA = N-terminal N(alpha)-acetyl-L-methionyl-L-seryl-[protein] + CoA + H(+). It catalyses the reaction N-terminal L-methionyl-L-valyl-[protein] + acetyl-CoA = N-terminal N(alpha)-acetyl-L-methionyl-L-valyl-[protein] + CoA + H(+). The catalysed reaction is N-terminal L-methionyl-L-threonyl-[protein] + acetyl-CoA = N-terminal N(alpha)-acetyl-L-methionyl-L-threonyl-[protein] + CoA + H(+). It carries out the reaction N-terminal L-methionyl-L-lysyl-[protein] + acetyl-CoA = N-terminal N(alpha)-acetyl-L-methionyl-L-lysyl-[protein] + CoA + H(+). The enzyme catalyses N-terminal L-methionyl-L-leucyl-[protein] + acetyl-CoA = N-terminal N(alpha)-acetyl-L-methionyl-L-leucyl-[protein] + CoA + H(+). It catalyses the reaction N-terminal L-methionyl-L-phenylalanyl-[protein] + acetyl-CoA = N-terminal N(alpha)-acetyl-L-methionyl-L-phenylalanyl-[protein] + CoA + H(+). The catalysed reaction is N-terminal L-methionyl-L-tyrosyl-[protein] + acetyl-CoA = N-terminal N(alpha)-acetyl-L-methionyl-L-tyrosyl-[protein] + CoA + H(+). In terms of biological role, N-alpha-acetyltransferase that acetylates the N-terminus of proteins that retain their initiating methionine. Has a broad substrate specificity: able to acetylate the initiator methionine of most peptides, except for those with a proline in second position. Also displays N-epsilon-acetyltransferase activity by mediating acetylation of the side chain of specific lysines on proteins. Autoacetylates in vivo. The relevance of N-epsilon-acetyltransferase activity is however unclear: able to acetylate H4 in vitro, but this result has not been confirmed in vivo. Component of N-alpha-acetyltransferase complexes containing NAA10 and NAA15, which has N-alpha-acetyltransferase activity. Does not influence the acetyltransferase activity of NAA10. However, it negatively regulates the N-alpha-acetyltransferase activity of the N-terminal acetyltransferase A complex (also called the NatA complex). The multiprotein complexes probably constitute the major contributor for N-terminal acetylation at the ribosome exit tunnel, with NAA10 acetylating all amino termini that are devoid of methionine and NAA50 acetylating other peptides. Required for sister chromatid cohesion during mitosis by promoting binding of CDCA5/sororin to cohesin: may act by counteracting the function of NAA10. The sequence is that of N-alpha-acetyltransferase 50 from Mus musculus (Mouse).